A 491-amino-acid chain; its full sequence is Keratin, type II microfibrillar, component 7C (491 aa).

C1 is subject to Blocked amino end (Cys). The interval 1–109 (CGFSTVGSGF…PNAQCVKQEE (109 aa)) is head. In terms of domain architecture, IF rod spans 109 to 420 (EKEQIKCLNN…RLLEGEEQRL (312 aa)). The coil 1A stretch occupies residues 110-144 (KEQIKCLNNRFAAFIDKVRFLEQQNKLLETKLQFF). The interval 145 to 154 (QNRQCCESNL) is linker 1. Residues 155-255 (EPLFEGYIET…YQEEIRVLQA (101 aa)) form a coil 1B region. A linker 12 region spans residues 256 to 272 (NISDTSVIVKMDNSRDL). A coil 2 region spans residues 273–416 (NMDCIVAEIK…ATYRRLLEGE (144 aa)). A tail region spans residues 417-491 (EQRLCEGVGA…GGGSCSLGRC (75 aa)).

This sequence belongs to the intermediate filament family.

Its function is as follows. Wool microfibrillar keratin. This chain is Keratin, type II microfibrillar, component 7C, found in Ovis aries (Sheep).